The chain runs to 96 residues: Co-chaperonin GroES (96 aa).

The protein belongs to the GroES chaperonin family. Heptamer of 7 subunits arranged in a ring. Interacts with the chaperonin GroEL.

It localises to the cytoplasm. Its function is as follows. Together with the chaperonin GroEL, plays an essential role in assisting protein folding. The GroEL-GroES system forms a nano-cage that allows encapsulation of the non-native substrate proteins and provides a physical environment optimized to promote and accelerate protein folding. GroES binds to the apical surface of the GroEL ring, thereby capping the opening of the GroEL channel. The sequence is that of Co-chaperonin GroES from Shewanella denitrificans (strain OS217 / ATCC BAA-1090 / DSM 15013).